The sequence spans 308 residues: General transcription factor IIH subunit 3 (308 aa).

The C4-type zinc finger occupies 268–285; it reads CSVCLSIFCNFSPICTTC.

Belongs to the TFB4 family. As to quaternary structure, part of a TFIID-containing RNA polymerase II pre-initiation complex that is composed of TBP and at least GTF2A1, GTF2A2, GTF2E1, GTF2E2, GTF2F1, GTF2H2, GTF2H3, GTF2H4, GTF2H5, GTF2B, TCEA1, ERCC2, ERCC3, TAF1, TAF2, TAF3, TAF4, TAF5, TAF6, TAF7, TAF8, TAF9, TAF10, TAF11, TAF12 and TAF13. Component of the 7-subunit TFIIH core complex composed of XPB/ERCC3, XPD/ERCC2, GTF2H1, GTF2H2, GTF2H3, GTF2H4 and GTF2H5, which is active in NER. The core complex associates with the 3-subunit CDK-activating kinase (CAK) module composed of CCNH/cyclin H, CDK7 and MNAT1 to form the 10-subunit holoenzyme (holo-TFIIH) active in transcription. Interacts with RARA; the interaction requires prior phosphorylation of RARA on 'Ser-369' which then enhances interaction of RARA with CDK7.

It is found in the nucleus. Component of the general transcription and DNA repair factor IIH (TFIIH) core complex, which is involved in general and transcription-coupled nucleotide excision repair (NER) of damaged DNA and, when complexed to CAK, in RNA transcription by RNA polymerase II. In NER, TFIIH acts by opening DNA around the lesion to allow the excision of the damaged oligonucleotide and its replacement by a new DNA fragment. In transcription, TFIIH has an essential role in transcription initiation. When the pre-initiation complex (PIC) has been established, TFIIH is required for promoter opening and promoter escape. Phosphorylation of the C-terminal tail (CTD) of the largest subunit of RNA polymerase II by the kinase module CAK controls the initiation of transcription. The sequence is that of General transcription factor IIH subunit 3 (GTF2H3) from Homo sapiens (Human).